Reading from the N-terminus, the 318-residue chain is Aspartate carbamoyltransferase catalytic subunit (318 aa).

Residues arginine 57 and threonine 58 each contribute to the carbamoyl phosphate site. Lysine 85 provides a ligand contact to L-aspartate. Positions 107, 141, and 144 each coordinate carbamoyl phosphate. Arginine 174 and arginine 228 together coordinate L-aspartate. The carbamoyl phosphate site is built by glycine 269 and proline 270.

Belongs to the aspartate/ornithine carbamoyltransferase superfamily. ATCase family. As to quaternary structure, heterododecamer (2C3:3R2) of six catalytic PyrB chains organized as two trimers (C3), and six regulatory PyrI chains organized as three dimers (R2).

The enzyme catalyses carbamoyl phosphate + L-aspartate = N-carbamoyl-L-aspartate + phosphate + H(+). The protein operates within pyrimidine metabolism; UMP biosynthesis via de novo pathway; (S)-dihydroorotate from bicarbonate: step 2/3. Its function is as follows. Catalyzes the condensation of carbamoyl phosphate and aspartate to form carbamoyl aspartate and inorganic phosphate, the committed step in the de novo pyrimidine nucleotide biosynthesis pathway. The polypeptide is Aspartate carbamoyltransferase catalytic subunit (Mycolicibacterium smegmatis (strain ATCC 700084 / mc(2)155) (Mycobacterium smegmatis)).